We begin with the raw amino-acid sequence, 295 residues long: tRNA pseudouridine synthase A (295 aa).

The active-site Nucleophile is D67. Y125 is a binding site for substrate.

The protein belongs to the tRNA pseudouridine synthase TruA family. Homodimer.

It catalyses the reaction uridine(38/39/40) in tRNA = pseudouridine(38/39/40) in tRNA. Formation of pseudouridine at positions 38, 39 and 40 in the anticodon stem and loop of transfer RNAs. The polypeptide is tRNA pseudouridine synthase A (Prochlorococcus marinus (strain MIT 9303)).